We begin with the raw amino-acid sequence, 541 residues long: CTP synthase (541 aa).

Positions 1 to 268 are amidoligase domain; the sequence is MAKFIFITGG…AEIVCRRLGL (268 aa). Residue Ser-13 coordinates CTP. Ser-13 serves as a coordination point for UTP. Residues 14 to 19 and Asp-71 each bind ATP; that span reads GLGKGI. 2 residues coordinate Mg(2+): Asp-71 and Glu-141. CTP contacts are provided by residues 148–150, 189–194, and Lys-225; these read DIE and KTKPTQ. Residues 189–194 and Lys-225 contribute to the UTP site; that span reads KTKPTQ. The region spanning 293 to 539 is the Glutamine amidotransferase type-1 domain; sequence EIALVGKYVA…IKAALEYRAG (247 aa). L-glutamine is bound at residue Gly-359. Catalysis depends on Cys-386, which acts as the Nucleophile; for glutamine hydrolysis. L-glutamine-binding positions include 387-390, Glu-410, and Arg-467; that span reads MGMQ. Active-site residues include His-512 and Glu-514.

The protein belongs to the CTP synthase family. Homotetramer.

The enzyme catalyses UTP + L-glutamine + ATP + H2O = CTP + L-glutamate + ADP + phosphate + 2 H(+). It carries out the reaction L-glutamine + H2O = L-glutamate + NH4(+). The catalysed reaction is UTP + NH4(+) + ATP = CTP + ADP + phosphate + 2 H(+). The protein operates within pyrimidine metabolism; CTP biosynthesis via de novo pathway; CTP from UDP: step 2/2. Its activity is regulated as follows. Allosterically activated by GTP, when glutamine is the substrate; GTP has no effect on the reaction when ammonia is the substrate. The allosteric effector GTP functions by stabilizing the protein conformation that binds the tetrahedral intermediate(s) formed during glutamine hydrolysis. Inhibited by the product CTP, via allosteric rather than competitive inhibition. Its function is as follows. Catalyzes the ATP-dependent amination of UTP to CTP with either L-glutamine or ammonia as the source of nitrogen. Regulates intracellular CTP levels through interactions with the four ribonucleotide triphosphates. In Symbiobacterium thermophilum (strain DSM 24528 / JCM 14929 / IAM 14863 / T), this protein is CTP synthase.